A 109-amino-acid polypeptide reads, in one-letter code: Movement protein TGB2 (109 aa).

The Cytoplasmic portion of the chain corresponds to 1–9 (MPLQPPPDH). The helical transmembrane segment at 10-30 (TWAVRIIALGLAVTALIFTST) threads the bilayer. Over 31–71 (RDTSRHVGDPSHSLPFGGHYRDGSKVIHYNSPRSSKPSNHT) the chain is Lumenal. A helical membrane pass occupies residues 72 to 92 (PYLLFAPIGIILLIHALHRLG). Residues 93–109 (NSAHICRCTHCMPHSQT) are Cytoplasmic-facing.

The protein belongs to the Tymovirales TGBp2 protein family.

The protein resides in the host endoplasmic reticulum membrane. Its function is as follows. Plays a role in viral cell-to-cell propagation, by facilitating genome transport to neighboring plant cells through plasmosdesmata,. The protein is Movement protein TGB2 of Citrus (ICRSV).